The following is a 130-amino-acid chain: ATP synthase epsilon chain (130 aa).

The protein belongs to the ATPase epsilon chain family. As to quaternary structure, F-type ATPases have 2 components, CF(1) - the catalytic core - and CF(0) - the membrane proton channel. CF(1) has five subunits: alpha(3), beta(3), gamma(1), delta(1), epsilon(1). CF(0) has three main subunits: a, b and c.

The protein localises to the cell membrane. Functionally, produces ATP from ADP in the presence of a proton gradient across the membrane. This chain is ATP synthase epsilon chain (atpC), found in Mycoplasmoides gallisepticum (strain R(low / passage 15 / clone 2)) (Mycoplasma gallisepticum).